A 785-amino-acid polypeptide reads, in one-letter code: Endonuclease MutS2 (785 aa).

335 to 342 (GPNTGGKT) contacts ATP. The region spanning 710–785 (LDLRGERYED…GNGVTIVEFK (76 aa)) is the Smr domain.

This sequence belongs to the DNA mismatch repair MutS family. MutS2 subfamily. Homodimer. Binds to stalled ribosomes, contacting rRNA.

In terms of biological role, endonuclease that is involved in the suppression of homologous recombination and thus may have a key role in the control of bacterial genetic diversity. Acts as a ribosome collision sensor, splitting the ribosome into its 2 subunits. Detects stalled/collided 70S ribosomes which it binds and splits by an ATP-hydrolysis driven conformational change. Acts upstream of the ribosome quality control system (RQC), a ribosome-associated complex that mediates the extraction of incompletely synthesized nascent chains from stalled ribosomes and their subsequent degradation. Probably generates substrates for RQC. The chain is Endonuclease MutS2 from Listeria monocytogenes serovar 1/2a (strain ATCC BAA-679 / EGD-e).